The primary structure comprises 253 residues: Ribonuclease HII (253 aa).

In terms of domain architecture, RNase H type-2 spans 30 to 221 (GPVAGVDEVG…VRRLVVDGEP (192 aa)). A divalent metal cation contacts are provided by aspartate 36, glutamate 37, and aspartate 130.

It belongs to the RNase HII family. It depends on Mn(2+) as a cofactor. Mg(2+) serves as cofactor.

The protein resides in the cytoplasm. It catalyses the reaction Endonucleolytic cleavage to 5'-phosphomonoester.. Endonuclease that specifically degrades the RNA of RNA-DNA hybrids. The chain is Ribonuclease HII from Mycolicibacterium gilvum (strain PYR-GCK) (Mycobacterium gilvum (strain PYR-GCK)).